We begin with the raw amino-acid sequence, 326 residues long: Serpentine receptor class gamma-14 (326 aa).

The next 7 helical transmembrane spans lie at 36–56 (QIIY…TILW), 67–83 (FFTL…SILI), 115–135 (IIML…VLLV), 156–176 (LKYV…NIAI), 204–224 (FQLV…AITL), 243–263 (VIIS…SFFF), and 274–294 (GFSF…MICV).

The protein belongs to the nematode receptor-like protein srg family.

Its subcellular location is the membrane. The sequence is that of Serpentine receptor class gamma-14 (srg-14) from Caenorhabditis elegans.